The following is a 450-amino-acid chain: Phosphoglucosamine mutase (450 aa).

Ser-101 (phosphoserine intermediate) is an active-site residue. Positions 101, 240, 242, and 244 each coordinate Mg(2+). Residue Ser-101 is modified to Phosphoserine.

The protein belongs to the phosphohexose mutase family. Mg(2+) is required as a cofactor. Activated by phosphorylation.

The catalysed reaction is alpha-D-glucosamine 1-phosphate = D-glucosamine 6-phosphate. In terms of biological role, catalyzes the conversion of glucosamine-6-phosphate to glucosamine-1-phosphate. The polypeptide is Phosphoglucosamine mutase (Streptococcus pneumoniae (strain Hungary19A-6)).